Here is a 631-residue protein sequence, read N- to C-terminus: MSATKLTRREQRAQAQHFIDTLEGSAFPNSKRIYITGTHPGVRVPMREIQLSPTLIGGSKEQPQYEENEAIPVYDTSGPYGDPQIAINVQQGLAKLRQPWIDARGDTEELTVRSSDYTKARLADDGLDELRFSGVLTPKRAKAGHRVTQLHYARKGIITPEMEFIAIRENMGRERIRSEVLRHQHPGMSFGARLPENITAEFVRDEVAAGRAIIPANINHPESEPMIIGRNFLVKVNANIGNSAVTSSIEEEVEKLVWSTRWGADTVMDLSTGRYIHETREWILRNSPVPIGTVPIYQALEKVNGIAEDLTWEVFRDTLLEQAEQGVDYFTIHAGVLLRYVPMTAKRLTGIVSRGGSIMAKWCLSHHQENFLYQHFREICEICAAYDVSLSLGDGLRPGSIQDANDEAQFAELHTLGELTKIAWEYDVQVMIEGPGHVPMQMIRRNMTEELEHCHEAPFYTLGPLTTDIAPGYDHFTSGIGAAMIGWFGCAMLCYVTPKEHLGLPNKEDVKQGLITYKIAAHAADLAKGHPGAQIRDNAMSKARFEFRWEDQFNLALDPFTARAYHDETLPQESGKVAHFCSMCGPKFCSMKISQEVRDYAAAQTIEVGMADMSENFRARGGEIYLRKEEA.

Substrate contacts are provided by residues Asn239, Met268, Tyr297, His333, 353–355 (SRG), 394–397 (DGLR), and Glu433. His437 contacts Zn(2+). Substrate is bound at residue Tyr460. A Zn(2+)-binding site is contributed by His501. Residues Cys581, Cys584, and Cys589 each contribute to the [4Fe-4S] cluster site.

Belongs to the ThiC family. As to quaternary structure, homodimer. It depends on [4Fe-4S] cluster as a cofactor.

The enzyme catalyses 5-amino-1-(5-phospho-beta-D-ribosyl)imidazole + S-adenosyl-L-methionine = 4-amino-2-methyl-5-(phosphooxymethyl)pyrimidine + CO + 5'-deoxyadenosine + formate + L-methionine + 3 H(+). It participates in cofactor biosynthesis; thiamine diphosphate biosynthesis. Functionally, catalyzes the synthesis of the hydroxymethylpyrimidine phosphate (HMP-P) moiety of thiamine from aminoimidazole ribotide (AIR) in a radical S-adenosyl-L-methionine (SAM)-dependent reaction. This chain is Phosphomethylpyrimidine synthase, found in Escherichia coli O6:K15:H31 (strain 536 / UPEC).